Consider the following 298-residue polypeptide: ATP synthase gamma chain (298 aa).

Belongs to the ATPase gamma chain family. F-type ATPases have 2 components, CF(1) - the catalytic core - and CF(0) - the membrane proton channel. CF(1) has five subunits: alpha(3), beta(3), gamma(1), delta(1), epsilon(1). CF(0) has three main subunits: a, b and c.

It is found in the cell inner membrane. Its function is as follows. Produces ATP from ADP in the presence of a proton gradient across the membrane. The gamma chain is believed to be important in regulating ATPase activity and the flow of protons through the CF(0) complex. This chain is ATP synthase gamma chain, found in Bacteroides thetaiotaomicron (strain ATCC 29148 / DSM 2079 / JCM 5827 / CCUG 10774 / NCTC 10582 / VPI-5482 / E50).